Here is a 207-residue protein sequence, read N- to C-terminus: Ion-translocating oxidoreductase complex subunit G (207 aa).

Residues 11 to 31 (GILLGFIALLCTIISAGIFFL) form a helical membrane-spanning segment. Position 175 is an FMN phosphoryl threonine (T175).

Belongs to the RnfG family. The complex is composed of six subunits: RnfA, RnfB, RnfC, RnfD, RnfE and RnfG. FMN serves as cofactor.

The protein localises to the cell inner membrane. Part of a membrane-bound complex that couples electron transfer with translocation of ions across the membrane. This Haemophilus influenzae (strain ATCC 51907 / DSM 11121 / KW20 / Rd) protein is Ion-translocating oxidoreductase complex subunit G.